A 361-amino-acid chain; its full sequence is Polyribonucleotide 5'-hydroxyl-kinase MJ1315 (361 aa).

Residue 39–46 (GGVDSGKT) coordinates ATP.

A divalent metal cation serves as cofactor.

The enzyme catalyses a 5'-end dephospho-2'-deoxyribonucleoside-DNA + ATP = a 5'-end 5'-phospho-2'-deoxyribonucleoside-DNA + ADP + H(+). The catalysed reaction is a 5'-end dephospho-ribonucleoside-RNA + ATP = a 5'-end 5'-phospho-ribonucleoside-RNA + ADP + H(+). In terms of biological role, polynucleotide kinase that can phosphorylate the 5'-hydroxyl groups of both single-stranded RNA (ssRNA) and single-stranded DNA (ssDNA). Exhibits a strong preference for ssRNA. The protein is Polyribonucleotide 5'-hydroxyl-kinase MJ1315 of Methanocaldococcus jannaschii (strain ATCC 43067 / DSM 2661 / JAL-1 / JCM 10045 / NBRC 100440) (Methanococcus jannaschii).